A 70-amino-acid chain; its full sequence is Large ribosomal subunit protein bL31 (70 aa).

Positions 16, 18, 36, and 39 each coordinate Zn(2+).

The protein belongs to the bacterial ribosomal protein bL31 family. Type A subfamily. As to quaternary structure, part of the 50S ribosomal subunit. Zn(2+) is required as a cofactor.

Functionally, binds the 23S rRNA. The protein is Large ribosomal subunit protein bL31 of Fervidobacterium nodosum (strain ATCC 35602 / DSM 5306 / Rt17-B1).